A 668-amino-acid chain; its full sequence is MNQKVDIEALHETSINSDQPLLRLQQVSRSFMAGDREFQVLKHIDLAIHTGELVAIIGASGSGKSTLMNILGCLDHASAGSYQVNGQETRELDDDALAALRRDHFGFIFQRYHLLPHLDAVRNVEIPAIYAGTAQTTRHERAQALLTRLGLGGHLQHRPSQMSGGQQQRVSIARALMNGGQVILADEPTGALDTASGKEVMRTLLELHAAGHTVILVTHDPKVAANAERIIEVSDGEIISDRRTAQTTQPAPEAQPATPPGPAPRRLLASLGLFREAFNMAWIALISHRMRTLLTMLGIIIGITSVVSISAIGEGAKRYVLKDIQSIGSNTIDIYAGANFGDSRAKSIETLLPSDVAALNQLYYIDSATPVVGRSMLVRYRNVDVDAQLNGVSSRYFQVRNIQLAAGITFSDQDARRQAQVVVLDHNTAQRLFGPGVNPLGQVILVGKLPCTVIGVTSDHKNLFIAGNTLNLWMPYETAAGRVLGQRHLDSISVRVKDGMPSKAVEEQIKALMLQRHGTKDFFTNNLDSVMQTVQKTSRSLTLLLSLIAVISLVVGGIGVMNIMLVSVTERTREIGIRMAVGARQSDIRQQFLVEAVMVCLMGGVIGIGLSYAIGYLFTLFVQQWEMVFSLASVVTAFACSTLIGVLFGFVPARNAARLDPIEALARD.

In terms of domain architecture, ABC transporter spans 22-260 (LRLQQVSRSF…APEAQPATPP (239 aa)). 58-65 (GASGSGKS) is a binding site for ATP. Residues 242–263 (RRTAQTTQPAPEAQPATPPGPA) form a disordered region. Residues 245–256 (AQTTQPAPEAQP) are compositionally biased toward low complexity. Helical transmembrane passes span 267-287 (LLAS…ALIS), 293-313 (LLTM…SAIG), 541-561 (LTLL…IGVM), 602-622 (MGGV…TLFV), and 631-651 (LASV…FGFV).

This sequence belongs to the ABC transporter superfamily. Macrolide exporter (TC 3.A.1.122) family. Probably part of a tripartite efflux system, which is composed of an inner membrane transporter, a periplasmic membrane fusion protein, and an outer membrane component.

The protein resides in the cell inner membrane. In terms of biological role, probably involved in the export of syringafactins. This is Probable syringafactin export ATP-binding/permease protein SyfD from Pseudomonas syringae pv. tomato (strain ATCC BAA-871 / DC3000).